Reading from the N-terminus, the 292-residue chain is Coiled-coil domain-containing protein 192 (292 aa).

The segment at 28–55 is disordered; it reads SVVPESDTSERSSMTSGSSESDIPQENK. A compositionally biased stretch (low complexity) spans 38–49; it reads RSSMTSGSSESD. Coiled-coil stretches lie at residues 65–174 and 222–258; these read QMAF…LATA and IMEL…AERS. Over residues 251 to 267 the composition is skewed to basic and acidic residues; sequence QQLEAERSPHPPQEVKD. Residues 251–292 form a disordered region; it reads QQLEAERSPHPPQEVKDPPGCLPEAPVFSTHDIPPVVSDENL.

The protein is Coiled-coil domain-containing protein 192 of Homo sapiens (Human).